The following is a 199-amino-acid chain: Crossover junction endodeoxyribonuclease RuvC (199 aa).

Catalysis depends on residues Asp17, Glu76, and Asp148. Mg(2+)-binding residues include Asp17, Glu76, and Asp148.

This sequence belongs to the RuvC family. Homodimer which binds Holliday junction (HJ) DNA. The HJ becomes 2-fold symmetrical on binding to RuvC with unstacked arms; it has a different conformation from HJ DNA in complex with RuvA. In the full resolvosome a probable DNA-RuvA(4)-RuvB(12)-RuvC(2) complex forms which resolves the HJ. The cofactor is Mg(2+).

Its subcellular location is the cytoplasm. The catalysed reaction is Endonucleolytic cleavage at a junction such as a reciprocal single-stranded crossover between two homologous DNA duplexes (Holliday junction).. The RuvA-RuvB-RuvC complex processes Holliday junction (HJ) DNA during genetic recombination and DNA repair. Endonuclease that resolves HJ intermediates. Cleaves cruciform DNA by making single-stranded nicks across the HJ at symmetrical positions within the homologous arms, yielding a 5'-phosphate and a 3'-hydroxyl group; requires a central core of homology in the junction. The consensus cleavage sequence is 5'-(A/T)TT(C/G)-3'. Cleavage occurs on the 3'-side of the TT dinucleotide at the point of strand exchange. HJ branch migration catalyzed by RuvA-RuvB allows RuvC to scan DNA until it finds its consensus sequence, where it cleaves and resolves the cruciform DNA. This Mannheimia succiniciproducens (strain KCTC 0769BP / MBEL55E) protein is Crossover junction endodeoxyribonuclease RuvC.